A 261-amino-acid polypeptide reads, in one-letter code: Ribonuclease PH (261 aa).

Residues arginine 86 and 124 to 126 (GTR) each bind phosphate.

This sequence belongs to the RNase PH family. Homohexameric ring arranged as a trimer of dimers.

It carries out the reaction tRNA(n+1) + phosphate = tRNA(n) + a ribonucleoside 5'-diphosphate. Its function is as follows. Phosphorolytic 3'-5' exoribonuclease that plays an important role in tRNA 3'-end maturation. Removes nucleotide residues following the 3'-CCA terminus of tRNAs; can also add nucleotides to the ends of RNA molecules by using nucleoside diphosphates as substrates, but this may not be physiologically important. Probably plays a role in initiation of 16S rRNA degradation (leading to ribosome degradation) during starvation. This is Ribonuclease PH from Persephonella marina (strain DSM 14350 / EX-H1).